A 424-amino-acid polypeptide reads, in one-letter code: GTPase Obg (424 aa).

The region spanning 1–159 is the Obg domain; it reads MVFIDTARIY…MWVRLELKLL (159 aa). Residues 160 to 330 enclose the OBG-type G domain; it reads ADVGLVGFPN…LLDKTIEILS (171 aa). GTP is bound by residues 166–173, 191–195, 212–215, 282–285, and 311–313; these read GFPNAGKS, FTTLT, DIPG, NKMD, and SAL. The Mg(2+) site is built by serine 173 and threonine 193. The OCT domain occupies 347–424; the sequence is NPPEEEETLE…VRDFEFEYYE (78 aa).

This sequence belongs to the TRAFAC class OBG-HflX-like GTPase superfamily. OBG GTPase family. Monomer. It depends on Mg(2+) as a cofactor.

The protein resides in the cytoplasm. An essential GTPase which binds GTP, GDP and possibly (p)ppGpp with moderate affinity, with high nucleotide exchange rates and a fairly low GTP hydrolysis rate. Plays a role in control of the cell cycle, stress response, ribosome biogenesis and in those bacteria that undergo differentiation, in morphogenesis control. The polypeptide is GTPase Obg (Caldanaerobacter subterraneus subsp. tengcongensis (strain DSM 15242 / JCM 11007 / NBRC 100824 / MB4) (Thermoanaerobacter tengcongensis)).